We begin with the raw amino-acid sequence, 581 residues long: MKSIILFVLSLLLILEKQAAVMGQKGGSKGQSPSGSSQFPHGQKGQHYFGQKDQQHTKSKGSFSIQHTYHVDVNDHDRTRESQQYDLNALHKTRKSKQHLGGSQELLNYKQEGRDHDKSKGHFHMIVIHHKGGKAHRGTQNPSQDQGNSPSGRGISSQYSNTEKRLWVHGLSKEQASASGAQKGRTQGRSQSSYVLQTEELVANKQRETQNSHQNKGHYQNVVEVREKHSSKLQTSLRPAYQDRLQHGPKDIFTTQGELLVYDKNQHQTKNLNQDQEHGRKAHKISYQSSHTEERQLNHGEKSVQKDISKGRISIQTEEKIHGKSQNQVTIHSQDQEHGHKENKMSYQSSSTEERHLNCGEKGIQKSVSKGSISIQTEEQIHGKSQNQVRIPSQAQEYGHKENKISYQSSSTEERRLNSGEKDIQKGVSKGSISIQTEEKIHGKSQDQVTIPSQDQEHGHKENKMSYQSSSTEERRLNYGGKNTQKDVSQSSISFQTEKLVEGKSQIQTPNPNQDQWSGQNAKGKSGQSADREQDLLSHEQKGRYQQESSAARNIVITEHEVARDDHLTQQYNEDRNPIST.

The N-terminal stretch at 1–23 is a signal peptide; that stretch reads MKSIILFVLSLLLILEKQAAVMG. Disordered regions lie at residues 24-62, 132-157, 173-194, and 271-581; these read QKGG…SKGS, GGKA…GISS, KEQA…QSSY, and NLNQ…PIST. 2 stretches are compositionally biased toward polar residues: residues 138–157 and 174–194; these read GTQN…GISS and EQAS…QSSY. The segment covering 291–310 has biased composition (basic and acidic residues); the sequence is HTEERQLNHGEKSVQKDISK. Polar residues predominate over residues 324–333; it reads KSQNQVTIHS. The span at 334–344 shows a compositional bias: basic and acidic residues; that stretch reads QDQEHGHKENK. Residues 366 to 396 are compositionally biased toward polar residues; the sequence is KSVSKGSISIQTEEQIHGKSQNQVRIPSQAQ. Composition is skewed to basic and acidic residues over residues 412–425 and 455–464; these read TEER…KDIQ and DQEHGHKENK. Polar residues-rich tracts occupy residues 481–497 and 505–529; these read GKNT…SFQT and SQIQ…SGQS. 2 stretches are compositionally biased toward basic and acidic residues: residues 530-545 and 558-581; these read ADRE…KGRY and TEHE…PIST.

It belongs to the semenogelin family. As to quaternary structure, interacts with SERPINA5.

It localises to the secreted. Participates in the formation of a gel matrix (sperm coagulum) entrapping the accessory gland secretions and ejaculated spermatozoa. This chain is Semenogelin-2 (SEMG2), found in Pongo abelii (Sumatran orangutan).